A 413-amino-acid chain; its full sequence is MEQICLIILLISKALSVGAQFNGYNCDANFHSRFPAERDISVYCGVQTITLKINFCPVLFSGYTDTDLALNGRHGDAHCRGFINNNTFPTVVLFSISLATLETCGNALVVSTAQGPNAYGNLSLVQIGNISGYIDTPDPPTIISYLPGLLYKFSCSYPLEYLVNNTQLASSAAAISVKDSNGTFVSTLSLLLYNDSSYVQQLSIPMAGLTLKTRVFAAVKATNLDRRWNVLMDYCYTTASGNPNDELRYDLFFSCDKDPQTTVFENGKSQMGRFAFEVFRFVKHKNQKMSTVFLHCVTKLCRADDCPMLMPICGSRKKRDVSERTESNSASGNAIITAGPIITRSDDTPMNNSQLAQLNSPVFRMNTVTSALISGIIILGVMSLCFFILSLTLLKGKRAPPTILSGARNPAFN.

The N-terminal stretch at 1–19 (MEQICLIILLISKALSVGA) is a signal peptide. Position 20 is a pyrrolidone carboxylic acid (Gln20). Residues 20 to 370 (QFNGYNCDAN…PVFRMNTVTS (351 aa)) lie on the Extracellular side of the membrane. Residues 43–320 (YCGVQTITLK…PICGSRKKRD (278 aa)) form the ZP domain. 2 disulfides stabilise this stretch: Cys44–Cys155 and Cys79–Cys104. N-linked (GlcNAc...) asparagine glycosylation is found at Asn85, Asn121, Asn129, Asn164, Asn181, and Asn194. Disulfide bonds link Cys235–Cys296 and Cys255–Cys313. Asn351 is a glycosylation site (N-linked (GlcNAc...) asparagine). Residues 371–391 (ALISGIIILGVMSLCFFILSL) form a helical membrane-spanning segment. Residues 392-413 (TLLKGKRAPPTILSGARNPAFN) lie on the Cytoplasmic side of the membrane.

Post-translationally, proteolytically cleaved before the transmembrane segment to yield the secreted form found in the extracellular matrix of the cupula. N-glycosylated. Detected in the acellular cupulae of the vestibular organ, and also in support cells adjacent to the cupula (at protein level).

It is found in the cytoplasmic vesicle membrane. The protein resides in the secreted. Its subcellular location is the extracellular space. The protein localises to the extracellular matrix. In terms of biological role, glycoprotein which is a component of the gelatinous extracellular matrix in the cupulae of the vestibular organ. This chain is Zona pellucida-like domain-containing protein 1, found in Salmo salar (Atlantic salmon).